The sequence spans 292 residues: uncharacterized protein (292 aa).

Active-site charge relay system residues include serine 44 and tyrosine 106. The Proton donor role is filled by tyrosine 132. The Schiff-base intermediate with substrate role is filled by lysine 161.

This sequence belongs to the DapA family. In terms of assembly, homotetramer.

The protein resides in the cytoplasm. This is an uncharacterized protein from Thermoplasma acidophilum (strain ATCC 25905 / DSM 1728 / JCM 9062 / NBRC 15155 / AMRC-C165).